The chain runs to 514 residues: Na(+)/H(+) antiporter NhaB (514 aa).

The next 11 helical transmembrane spans lie at 13–33 (FMGN…IINP), 34–54 (LIFF…EFIF), 96–116 (VILL…LLLF), 136–156 (CFAS…AVVI), 203–223 (LMMH…VGEP), 236–256 (FVTF…AGLA), 304–324 (ALIG…VGII), 349–369 (EEAL…AVII), 392–412 (LFYL…VGTV), 448–468 (ATPN…SPLI), and 479–499 (ALPY…FWLV).

This sequence belongs to the NhaB Na(+)/H(+) (TC 2.A.34) antiporter family.

It is found in the cell inner membrane. It carries out the reaction 2 Na(+)(in) + 3 H(+)(out) = 2 Na(+)(out) + 3 H(+)(in). Na(+)/H(+) antiporter that extrudes sodium in exchange for external protons. The sequence is that of Na(+)/H(+) antiporter NhaB from Proteus mirabilis (strain HI4320).